We begin with the raw amino-acid sequence, 436 residues long: Anaerobic glycerol-3-phosphate dehydrogenase subunit B (436 aa).

The protein belongs to the anaerobic G-3-P dehydrogenase subunit B family. As to quaternary structure, composed of a catalytic GlpA/B dimer and of membrane bound GlpC. FMN is required as a cofactor.

It catalyses the reaction a quinone + sn-glycerol 3-phosphate = dihydroxyacetone phosphate + a quinol. Its pathway is polyol metabolism; glycerol degradation via glycerol kinase pathway; glycerone phosphate from sn-glycerol 3-phosphate (anaerobic route): step 1/1. Functionally, conversion of glycerol 3-phosphate to dihydroxyacetone. Uses fumarate or nitrate as electron acceptor. In Vibrio cholerae serotype O1 (strain M66-2), this protein is Anaerobic glycerol-3-phosphate dehydrogenase subunit B.